The primary structure comprises 275 residues: 4-diphosphocytidyl-2-C-methyl-D-erythritol kinase (275 aa).

Lysine 9 is an active-site residue. 90–100 (PVGGGLGGGSS) serves as a coordination point for ATP. Residue aspartate 132 is part of the active site.

The protein belongs to the GHMP kinase family. IspE subfamily.

It carries out the reaction 4-CDP-2-C-methyl-D-erythritol + ATP = 4-CDP-2-C-methyl-D-erythritol 2-phosphate + ADP + H(+). The protein operates within isoprenoid biosynthesis; isopentenyl diphosphate biosynthesis via DXP pathway; isopentenyl diphosphate from 1-deoxy-D-xylulose 5-phosphate: step 3/6. Catalyzes the phosphorylation of the position 2 hydroxy group of 4-diphosphocytidyl-2C-methyl-D-erythritol. This chain is 4-diphosphocytidyl-2-C-methyl-D-erythritol kinase, found in Sulfurihydrogenibium sp. (strain YO3AOP1).